The following is a 284-amino-acid chain: Pantothenate synthetase (284 aa).

Position 30–37 (M30–H37) interacts with ATP. Residue H37 is the Proton donor of the active site. A (R)-pantoate-binding site is contributed by Q61. Q61 serves as a coordination point for beta-alanine. Residue G149–D152 coordinates ATP. Residue Q155 participates in (R)-pantoate binding. ATP contacts are provided by residues I178 and L186–R189.

The protein belongs to the pantothenate synthetase family. Homodimer.

It localises to the cytoplasm. The catalysed reaction is (R)-pantoate + beta-alanine + ATP = (R)-pantothenate + AMP + diphosphate + H(+). It participates in cofactor biosynthesis; (R)-pantothenate biosynthesis; (R)-pantothenate from (R)-pantoate and beta-alanine: step 1/1. Functionally, catalyzes the condensation of pantoate with beta-alanine in an ATP-dependent reaction via a pantoyl-adenylate intermediate. This is Pantothenate synthetase from Salmonella paratyphi A (strain ATCC 9150 / SARB42).